A 576-amino-acid chain; its full sequence is Acetylcholine receptor subunit alpha-like 2 (576 aa).

An N-terminal signal peptide occupies residues 1 to 21 (MAPGCCTTRPRPIALLAHIWR). Residues 22-261 (HCKPLCLLLV…FFNITLRRKT (240 aa)) lie on the Extracellular side of the membrane. Asparagine 65 is a glycosylation site (N-linked (GlcNAc...) asparagine). Cystine bridges form between cysteine 169–cysteine 183 and cysteine 243–cysteine 244. Residue asparagine 254 is glycosylated (N-linked (GlcNAc...) asparagine). The next 3 membrane-spanning stretches (helical) occupy residues 262-285 (LFYT…VFYL), 293-311 (IALC…LLIS), and 327-346 (YLLF…IIIL). Over 347-526 (NIHYRKPSTH…WGFVAMVMDR (180 aa)) the chain is Cytoplasmic. The chain crosses the membrane as a helical span at residues 527 to 545 (LFLWLFMIASLVGTFVILG). Asparagine 570 carries an N-linked (GlcNAc...) asparagine glycan.

This sequence belongs to the ligand-gated ion channel (TC 1.A.9) family. Acetylcholine receptor (TC 1.A.9.1) subfamily. CNS in embryos.

Its subcellular location is the postsynaptic cell membrane. It is found in the cell membrane. After binding acetylcholine, the AChR responds by an extensive change in conformation that affects all subunits and leads to opening of an ion-conducting channel across the plasma membrane. The sequence is that of Acetylcholine receptor subunit alpha-like 2 (nAChRalpha2) from Drosophila melanogaster (Fruit fly).